Here is a 328-residue protein sequence, read N- to C-terminus: GTP cyclohydrolase MptA (328 aa).

It belongs to the GTP cyclohydrolase IV family. In terms of assembly, homodimer. Requires Fe(2+) as cofactor.

The catalysed reaction is GTP + H2O = 7,8-dihydroneopterin 2',3'-cyclic phosphate + formate + diphosphate + H(+). It participates in cofactor biosynthesis; 5,6,7,8-tetrahydromethanopterin biosynthesis. In terms of biological role, converts GTP to 7,8-dihydro-D-neopterin 2',3'-cyclic phosphate, the first intermediate in the biosynthesis of coenzyme methanopterin. This chain is GTP cyclohydrolase MptA, found in Methanospirillum hungatei JF-1 (strain ATCC 27890 / DSM 864 / NBRC 100397 / JF-1).